A 184-amino-acid chain; its full sequence is Ribosome maturation factor RimM (184 aa).

Residues 112 to 184 enclose the PRC barrel domain; that stretch reads TDSYYWIDLI…SNKTISLDWQ (73 aa).

This sequence belongs to the RimM family. In terms of assembly, binds ribosomal protein uS19.

Its subcellular location is the cytoplasm. An accessory protein needed during the final step in the assembly of 30S ribosomal subunit, possibly for assembly of the head region. Essential for efficient processing of 16S rRNA. May be needed both before and after RbfA during the maturation of 16S rRNA. It has affinity for free ribosomal 30S subunits but not for 70S ribosomes. The protein is Ribosome maturation factor RimM of Polynucleobacter necessarius subsp. necessarius (strain STIR1).